A 264-amino-acid polypeptide reads, in one-letter code: Tritrans,polycis-undecaprenyl-diphosphate synthase (geranylgeranyl-diphosphate specific) (264 aa).

The active site involves Asp43. Asp43 serves as a coordination point for Mg(2+). Residues 44 to 47 (GNRR), Trp48, His60, and 88 to 90 (STE) contribute to the substrate site. Catalysis depends on Asn91, which acts as the Proton acceptor. Substrate is bound by residues Phe92, Arg94, Arg213, and 219–221 (RIS). Glu232 contributes to the Mg(2+) binding site.

This sequence belongs to the UPP synthase family. In terms of assembly, homodimer. Mg(2+) serves as cofactor.

It carries out the reaction geranylgeranyl diphosphate + 7 isopentenyl diphosphate = tri-trans,hepta-cis-undecaprenyl diphosphate + 7 diphosphate. Catalyzes the sequential condensation of isopentenyl diphosphate (IPP) with geranylgeranyl diphosphate (GGPP) to yield (2Z,6Z,10Z,14Z,18Z,22Z,26Z,30E,34E,38E)-undecaprenyl diphosphate (tritrans,heptacis-UPP). It is probably the precursor of glycosyl carrier lipids. This Pyrococcus horikoshii (strain ATCC 700860 / DSM 12428 / JCM 9974 / NBRC 100139 / OT-3) protein is Tritrans,polycis-undecaprenyl-diphosphate synthase (geranylgeranyl-diphosphate specific).